Here is a 568-residue protein sequence, read N- to C-terminus: Protein yellow (568 aa).

The N-terminal stretch at 1 to 28 (MHAQDKGGILPALSLLLIAVAMVSPSQA) is a signal peptide. Residues N151 and N222 are each glycosylated (N-linked (GlcNAc...) asparagine).

This sequence belongs to the major royal jelly protein family.

Its subcellular location is the secreted. Functionally, controls the pigmentation pattern of the adult cuticle and larval mouth parts. This is Protein yellow (y) from Drosophila subobscura (Fruit fly).